The chain runs to 369 residues: Histidinol-phosphate aminotransferase 2 (369 aa).

An N6-(pyridoxal phosphate)lysine modification is found at lysine 229.

This sequence belongs to the class-II pyridoxal-phosphate-dependent aminotransferase family. Histidinol-phosphate aminotransferase subfamily. In terms of assembly, homodimer. It depends on pyridoxal 5'-phosphate as a cofactor.

The catalysed reaction is L-histidinol phosphate + 2-oxoglutarate = 3-(imidazol-4-yl)-2-oxopropyl phosphate + L-glutamate. It functions in the pathway amino-acid biosynthesis; L-histidine biosynthesis; L-histidine from 5-phospho-alpha-D-ribose 1-diphosphate: step 7/9. This Pseudomonas aeruginosa (strain ATCC 15692 / DSM 22644 / CIP 104116 / JCM 14847 / LMG 12228 / 1C / PRS 101 / PAO1) protein is Histidinol-phosphate aminotransferase 2 (hisC2).